Consider the following 369-residue polypeptide: Anhydro-N-acetylmuramic acid kinase (369 aa).

12 to 19 is an ATP binding site; the sequence is GTSLDGVD.

The protein belongs to the anhydro-N-acetylmuramic acid kinase family.

It carries out the reaction 1,6-anhydro-N-acetyl-beta-muramate + ATP + H2O = N-acetyl-D-muramate 6-phosphate + ADP + H(+). Its pathway is amino-sugar metabolism; 1,6-anhydro-N-acetylmuramate degradation. It functions in the pathway cell wall biogenesis; peptidoglycan recycling. Its function is as follows. Catalyzes the specific phosphorylation of 1,6-anhydro-N-acetylmuramic acid (anhMurNAc) with the simultaneous cleavage of the 1,6-anhydro ring, generating MurNAc-6-P. Is required for the utilization of anhMurNAc either imported from the medium or derived from its own cell wall murein, and thus plays a role in cell wall recycling. This Shigella flexneri serotype 5b (strain 8401) protein is Anhydro-N-acetylmuramic acid kinase.